The following is a 203-amino-acid chain: Recombination protein RecR (203 aa).

The C4-type zinc-finger motif lies at 58–73 (CDYCGNLDIVSICNIC). The Toprim domain occupies 81–177 (STIAVVESVA…KISKLASGIP (97 aa)).

This sequence belongs to the RecR family.

Functionally, may play a role in DNA repair. It seems to be involved in an RecBC-independent recombinational process of DNA repair. It may act with RecF and RecO. In Orientia tsutsugamushi (strain Ikeda) (Rickettsia tsutsugamushi), this protein is Recombination protein RecR.